The primary structure comprises 301 residues: POU domain, class 6, transcription factor 1 (301 aa).

2 repeat units span residues 11-17 and 50-56. Residues 11-56 form a 2 X 7 AA repeats of N-A-Q-G-Q-V-I region; it reads NAQGQVIGALPWVVNSASVATPAPAQSLQVQAVTPQLLLNAQGQVI. A disordered region spans residues 66–88; sequence QPVAVRKPSTPESPAKSEVQPIQ. The region spanning 139-213 is the POU-specific domain; it reads EDGINLEEIR…VLEKWLNEAE (75 aa). A DNA-binding region (homeobox) is located at residues 234-293; the sequence is KRKRRTSFTPQAIEALNAYFEKNPLPTGQEITEIAKELNYDREVVRVWFCNRRQTLKNTS.

It belongs to the POU transcription factor family. Class-6 subfamily. As to expression, in the embryo, widely expressed, with highest levels in the developing brain and spinal cord. In the adult, mostly found in the brain, where it is diffusely expressed with the exception of an enrichment in layer IV of the neocortex. Also found in kidney, lung, heart, adrenal, skin, and placenta. Low levels in spleen, muscle, liver, anterior pituitary, testis and ovary.

The protein resides in the nucleus. Transcription factor that binds preferentially to a variant of the octamer motif (5'-ATGATAAT-3'). This chain is POU domain, class 6, transcription factor 1 (Pou6f1), found in Rattus norvegicus (Rat).